A 663-amino-acid polypeptide reads, in one-letter code: ATP-dependent zinc metalloprotease FtsH (663 aa).

Over 1 to 12 (MNKKETNTSWWR) the chain is Stromal. A helical membrane pass occupies residues 13–33 (IILISLGISIICILAAFLAMK). Residues 34–135 (DGFFVLENNT…HPPKLDIFKT (102 aa)) lie on the Lumenal side of the membrane. A helical transmembrane segment spans residues 136–156 (ISDTLGSLIVPGLVVAVFYLF). The Stromal segment spans residues 157–663 (LERANNNNNN…KIYESKFPKK (507 aa)). Residues 165-184 (NNNSNGSPFGPGGGPNQNMR) form a disordered region. An ATP-binding site is contributed by 244-251 (GPPGTGKT). A Zn(2+)-binding site is contributed by histidine 465. The active site involves glutamate 466. Residues histidine 469 and aspartate 543 each contribute to the Zn(2+) site.

In the central section; belongs to the AAA ATPase family. This sequence in the C-terminal section; belongs to the peptidase M41 family. As to quaternary structure, homohexamer. Zn(2+) is required as a cofactor.

Its subcellular location is the plastid. It localises to the chloroplast thylakoid membrane. Functionally, acts as a processive, ATP-dependent zinc metallopeptidase. This Heterosigma akashiwo (strain NIES-293 / 8280G21-1) protein is ATP-dependent zinc metalloprotease FtsH.